A 238-amino-acid chain; its full sequence is Lipoprotein-releasing system ATP-binding protein LolD (238 aa).

An ABC transporter domain is found at leucine 6 to alanine 238. Glycine 42–serine 49 is a binding site for ATP.

This sequence belongs to the ABC transporter superfamily. Lipoprotein translocase (TC 3.A.1.125) family. As to quaternary structure, the complex is composed of two ATP-binding proteins (LolD) and two transmembrane proteins (LolC and LolE).

Its subcellular location is the cell inner membrane. Its function is as follows. Part of the ABC transporter complex LolCDE involved in the translocation of mature outer membrane-directed lipoproteins, from the inner membrane to the periplasmic chaperone, LolA. Responsible for the formation of the LolA-lipoprotein complex in an ATP-dependent manner. This chain is Lipoprotein-releasing system ATP-binding protein LolD, found in Aliivibrio fischeri (strain ATCC 700601 / ES114) (Vibrio fischeri).